Here is a 475-residue protein sequence, read N- to C-terminus: Lactate utilization protein B (475 aa).

4Fe-4S ferredoxin-type domains follow at residues 304–334 and 353–382; these read GTEF…GHSY and YDDY…LHEL. [4Fe-4S] cluster contacts are provided by Cys313, Cys316, Cys319, Cys323, Cys366, Cys369, and Cys373.

The protein belongs to the LutB/YkgF family.

Is involved in L-lactate degradation and allows cells to grow with lactate as the sole carbon source. Has probably a role as an electron transporter during oxidation of L-lactate. In Geobacillus sp. (strain WCH70), this protein is Lactate utilization protein B.